Here is a 423-residue protein sequence, read N- to C-terminus: Glutamate-1-semialdehyde 2,1-aminomutase (423 aa).

At Lys-258 the chain carries N6-(pyridoxal phosphate)lysine.

Belongs to the class-III pyridoxal-phosphate-dependent aminotransferase family. HemL subfamily. Requires pyridoxal 5'-phosphate as cofactor.

Its subcellular location is the cytoplasm. The catalysed reaction is (S)-4-amino-5-oxopentanoate = 5-aminolevulinate. Its pathway is porphyrin-containing compound metabolism; protoporphyrin-IX biosynthesis; 5-aminolevulinate from L-glutamyl-tRNA(Glu): step 2/2. The sequence is that of Glutamate-1-semialdehyde 2,1-aminomutase from Pyrobaculum arsenaticum (strain DSM 13514 / JCM 11321 / PZ6).